Reading from the N-terminus, the 181-residue chain is ATP-dependent protease subunit HslV (181 aa).

T7 is an active-site residue. The Na(+) site is built by G166, C169, and T172.

This sequence belongs to the peptidase T1B family. HslV subfamily. As to quaternary structure, a double ring-shaped homohexamer of HslV is capped on each side by a ring-shaped HslU homohexamer. The assembly of the HslU/HslV complex is dependent on binding of ATP.

Its subcellular location is the cytoplasm. It catalyses the reaction ATP-dependent cleavage of peptide bonds with broad specificity.. With respect to regulation, allosterically activated by HslU binding. Protease subunit of a proteasome-like degradation complex believed to be a general protein degrading machinery. The sequence is that of ATP-dependent protease subunit HslV from Acidovorax ebreus (strain TPSY) (Diaphorobacter sp. (strain TPSY)).